The following is a 601-amino-acid chain: Invasin CotH3 (601 aa).

The first 17 residues, 1–17, serve as a signal peptide directing secretion; it reads MKLSIISAAFLVAITHA. Residues asparagine 28, asparagine 85, asparagine 170, asparagine 324, asparagine 449, asparagine 527, asparagine 541, asparagine 554, asparagine 561, and asparagine 571 are each glycosylated (N-linked (GlcNAc...) asparagine). Residues 539–579 are compositionally biased toward low complexity; sequence SANGTTAAAPAPAAGNSTGKGGNQSISSSASSNKTSAQSTS. Positions 539–581 are disordered; that stretch reads SANGTTAAAPAPAAGNSTGKGGNQSISSSASSNKTSAQSTSGA. Serine 579 carries GPI-anchor amidated serine lipidation. The propeptide at 580-601 is removed in mature form; the sequence is GASRSKTAPIVLAISALALLVF.

Interacts with HSPA5/BiP on the cell surface of host nasal epithelial cells.

It is found in the cell membrane. Functionally, promotes invasion of host epithelial cells by adhering to receptors on the host cell surface to facilitate endocytosis of the pathogen into host cells. Binds HSPA5/BiP protein on the cell surface of host nasal epithelial cells. This Rhizopus delemar (strain RA 99-880 / ATCC MYA-4621 / FGSC 9543 / NRRL 43880) (Mucormycosis agent) protein is Invasin CotH3.